The chain runs to 381 residues: Tetraacyldisaccharide 4'-kinase (381 aa).

Residue 78–85 (AVGGTGKT) participates in ATP binding.

Belongs to the LpxK family.

It catalyses the reaction a lipid A disaccharide + ATP = a lipid IVA + ADP + H(+). It functions in the pathway glycolipid biosynthesis; lipid IV(A) biosynthesis; lipid IV(A) from (3R)-3-hydroxytetradecanoyl-[acyl-carrier-protein] and UDP-N-acetyl-alpha-D-glucosamine: step 6/6. Transfers the gamma-phosphate of ATP to the 4'-position of a tetraacyldisaccharide 1-phosphate intermediate (termed DS-1-P) to form tetraacyldisaccharide 1,4'-bis-phosphate (lipid IVA). The polypeptide is Tetraacyldisaccharide 4'-kinase (Syntrophobacter fumaroxidans (strain DSM 10017 / MPOB)).